The chain runs to 343 residues: Dihydroorotate dehydrogenase (quinone) (343 aa).

FMN-binding positions include 61 to 65 (AGLDK) and threonine 85. Lysine 65 contacts substrate. 110 to 114 (NRMGF) contacts substrate. FMN is bound by residues asparagine 138 and asparagine 171. Residue asparagine 171 coordinates substrate. Serine 174 serves as the catalytic Nucleophile. Asparagine 176 lines the substrate pocket. The FMN site is built by lysine 216 and threonine 244. Residue 245-246 (NT) participates in substrate binding. FMN contacts are provided by residues glycine 267, glycine 296, and 317-318 (YS).

Belongs to the dihydroorotate dehydrogenase family. Type 2 subfamily. Monomer. Requires FMN as cofactor.

The protein localises to the cell membrane. It catalyses the reaction (S)-dihydroorotate + a quinone = orotate + a quinol. The protein operates within pyrimidine metabolism; UMP biosynthesis via de novo pathway; orotate from (S)-dihydroorotate (quinone route): step 1/1. In terms of biological role, catalyzes the conversion of dihydroorotate to orotate with quinone as electron acceptor. The protein is Dihydroorotate dehydrogenase (quinone) of Pseudomonas syringae pv. syringae (strain B728a).